Reading from the N-terminus, the 247-residue chain is 3-deoxy-manno-octulosonate cytidylyltransferase (247 aa).

It belongs to the KdsB family.

Its subcellular location is the cytoplasm. The enzyme catalyses 3-deoxy-alpha-D-manno-oct-2-ulosonate + CTP = CMP-3-deoxy-beta-D-manno-octulosonate + diphosphate. Its pathway is nucleotide-sugar biosynthesis; CMP-3-deoxy-D-manno-octulosonate biosynthesis; CMP-3-deoxy-D-manno-octulosonate from 3-deoxy-D-manno-octulosonate and CTP: step 1/1. The protein operates within bacterial outer membrane biogenesis; lipopolysaccharide biosynthesis. Activates KDO (a required 8-carbon sugar) for incorporation into bacterial lipopolysaccharide in Gram-negative bacteria. The sequence is that of 3-deoxy-manno-octulosonate cytidylyltransferase from Chlorobium phaeovibrioides (strain DSM 265 / 1930) (Prosthecochloris vibrioformis (strain DSM 265)).